The following is a 391-amino-acid chain: Phosphoglycerate kinase (391 aa).

Substrate contacts are provided by residues 21 to 23 (DLN), R36, 59 to 62 (HLGR), R113, and R146. ATP is bound by residues K197, E319, and 345–348 (GGDT).

It belongs to the phosphoglycerate kinase family. In terms of assembly, monomer.

The protein resides in the cytoplasm. It carries out the reaction (2R)-3-phosphoglycerate + ATP = (2R)-3-phospho-glyceroyl phosphate + ADP. It functions in the pathway carbohydrate degradation; glycolysis; pyruvate from D-glyceraldehyde 3-phosphate: step 2/5. This is Phosphoglycerate kinase from Shewanella denitrificans (strain OS217 / ATCC BAA-1090 / DSM 15013).